The primary structure comprises 104 residues: Small ribosomal subunit protein bS18 (104 aa).

Residues 1–14 are compositionally biased toward basic and acidic residues; that stretch reads MMNNEHDNFQKEVE. The disordered stretch occupies residues 1 to 25; it reads MMNNEHDNFQKEVETTTETTFNREE.

It belongs to the bacterial ribosomal protein bS18 family. Part of the 30S ribosomal subunit. Forms a tight heterodimer with protein bS6.

Functionally, binds as a heterodimer with protein bS6 to the central domain of the 16S rRNA, where it helps stabilize the platform of the 30S subunit. The sequence is that of Small ribosomal subunit protein bS18 from Mycoplasma pneumoniae (strain ATCC 29342 / M129 / Subtype 1) (Mycoplasmoides pneumoniae).